The following is a 546-amino-acid chain: Endoplasmic reticulum oxidoreductin-1 (546 aa).

Positions 1–18 are cleaved as a signal peptide; sequence MQLNKLMLGFMLCASALA. 5 cysteine pairs are disulfide-bonded: Cys-84-Cys-344, Cys-94-Cys-99, Cys-137-Cys-161, Cys-144-Cys-290, and Cys-347-Cys-350. FAD-binding residues include Arg-182, Thr-184, Trp-195, Ser-223, His-226, and Arg-255. An N-linked (GlcNAc...) asparagine glycan is attached at Asn-337. The active-site Nucleophile is Cys-347. Cys-350 is a catalytic residue. N-linked (GlcNAc...) asparagine glycosylation is found at Asn-422 and Asn-449.

This sequence belongs to the EROs family. As to quaternary structure, may function both as a monomer and a homodimer. FAD is required as a cofactor.

The protein localises to the endoplasmic reticulum membrane. Essential oxidoreductase that oxidizes proteins in the endoplasmic reticulum to produce disulfide bonds. Acts by oxidizing directly PDI1 isomerase through a direct disulfide exchange. Does not act as a direct oxidant of folding substrate, but relies on PDI1 to transfer oxidizing equivalent. Does not oxidize all pdi related proteins, suggesting that it can discriminate between PDI1 and related proteins. Its reoxidation probably involves electron transfer to molecular oxygen via FAD. Acts independently of glutathione. May be responsible for a significant proportion of reactive oxygen species (ROS) in the cell, thereby being a source of oxidative stress. This chain is Endoplasmic reticulum oxidoreductin-1 (ERO1), found in Eremothecium gossypii (strain ATCC 10895 / CBS 109.51 / FGSC 9923 / NRRL Y-1056) (Yeast).